Reading from the N-terminus, the 131-residue chain is Histone H2B.2 (131 aa).

A compositionally biased stretch (basic and acidic residues) spans 1–19 (MSAKAEKKPASKAPAEKKP). A disordered region spans residues 1–38 (MSAKAEKKPASKAPAEKKPAAKKTAPSSDGKKRTKARK). 2 positions are modified to N6-acetyllysine; alternate: Lys7 and Lys8. Residues Lys7 and Lys8 each participate in a glycyl lysine isopeptide (Lys-Gly) (interchain with G-Cter in SUMO); alternate cross-link. Ser11 carries the post-translational modification Phosphoserine. An N6-acetyllysine modification is found at Lys12. An N6-acetyllysine; alternate modification is found at Lys17. A Glycyl lysine isopeptide (Lys-Gly) (interchain with G-Cter in SUMO); alternate cross-link involves residue Lys17. Lys18 is covalently cross-linked (Glycyl lysine isopeptide (Lys-Gly) (interchain with G-Cter in SUMO)). Lys124 is covalently cross-linked (Glycyl lysine isopeptide (Lys-Gly) (interchain with G-Cter in ubiquitin)).

It belongs to the histone H2B family. As to quaternary structure, the nucleosome is a histone octamer containing two molecules each of H2A, H2B, H3 and H4 assembled in one H3-H4 heterotetramer and two H2A-H2B heterodimers. The octamer wraps approximately 147 bp of DNA. Post-translationally, monoubiquitinated by the UBC2-BRE1 complex to form H2BK123ub1. H2BK123ub1 gives a specific tag for epigenetic transcriptional activation and is also prerequisite for H3K4me and H3K79me formation. H2BK123ub1 also modulates the formation of double-strand breaks during meiosis and is a prerequisite for DNA-damage checkpoint activation. In terms of processing, phosphorylated by STE20 to form H2BS10ph during progression through meiotic prophase. May be correlated with chromosome condensation. Acetylated by GCN5 to form H2BK11ac and H2BK16ac. H2BK16ac can also be formed by ESA1. Acetylation of N-terminal lysines and particularly formation of H2BK11acK16ac has a positive effect on transcription. Post-translationally, sumoylation to form H2BK6su or H2BK7su, and probably also H2BK16su or H2BK17su, occurs preferentially near the telomeres and represses gene transcription.

It localises to the nucleus. The protein localises to the chromosome. Functionally, core component of nucleosome. Nucleosomes wrap and compact DNA into chromatin, limiting DNA accessibility to the cellular machineries which require DNA as a template. Histones thereby play a central role in transcription regulation, DNA repair, DNA replication and chromosomal stability. DNA accessibility is regulated via a complex set of post-translational modifications of histones, also called histone code, and nucleosome remodeling. The polypeptide is Histone H2B.2 (HTB2) (Candida glabrata (strain ATCC 2001 / BCRC 20586 / JCM 3761 / NBRC 0622 / NRRL Y-65 / CBS 138) (Yeast)).